The sequence spans 127 residues: MNYINKVMLVGRCGQEPDLKFFESGAVKASISIAVRPPYRSEQALWFDLVAWGNQAEVIGNYVRKGTQIAITGEFGFDRWADKNSGTMRQKPVITINTIELLGSPRKEESTSTSAPNETQAVANANF.

The SSB domain maps to 4 to 103; that stretch reads INKVMLVGRC…ITINTIELLG (100 aa). The interval 104-127 is disordered; that stretch reads SPRKEESTSTSAPNETQAVANANF. Polar residues predominate over residues 111–127; that stretch reads TSTSAPNETQAVANANF.

As to quaternary structure, homotetramer.

This chain is Single-stranded DNA-binding protein 2 (ssb2), found in Nostoc sp. (strain PCC 7120 / SAG 25.82 / UTEX 2576).